The following is a 666-amino-acid chain: 1-deoxy-D-xylulose-5-phosphate synthase (666 aa).

Residues His103 and 144–146 each bind thiamine diphosphate; that span reads AHS. Asp175 lines the Mg(2+) pocket. Residues 176 to 177, Asn204, Tyr314, and Glu396 each bind thiamine diphosphate; that span reads GA. Residue Asn204 coordinates Mg(2+).

Belongs to the transketolase family. DXPS subfamily. Homodimer. Mg(2+) serves as cofactor. Thiamine diphosphate is required as a cofactor.

It catalyses the reaction D-glyceraldehyde 3-phosphate + pyruvate + H(+) = 1-deoxy-D-xylulose 5-phosphate + CO2. It functions in the pathway metabolic intermediate biosynthesis; 1-deoxy-D-xylulose 5-phosphate biosynthesis; 1-deoxy-D-xylulose 5-phosphate from D-glyceraldehyde 3-phosphate and pyruvate: step 1/1. Functionally, catalyzes the acyloin condensation reaction between C atoms 2 and 3 of pyruvate and glyceraldehyde 3-phosphate to yield 1-deoxy-D-xylulose-5-phosphate (DXP). In Nitrobacter winogradskyi (strain ATCC 25391 / DSM 10237 / CIP 104748 / NCIMB 11846 / Nb-255), this protein is 1-deoxy-D-xylulose-5-phosphate synthase.